A 159-amino-acid chain; its full sequence is Crossover junction endodeoxyribonuclease RuvC (159 aa).

Residues aspartate 7, glutamate 67, and aspartate 139 contribute to the active site. Residues aspartate 7, glutamate 67, and aspartate 139 each coordinate Mg(2+).

It belongs to the RuvC family. Homodimer which binds Holliday junction (HJ) DNA. The HJ becomes 2-fold symmetrical on binding to RuvC with unstacked arms; it has a different conformation from HJ DNA in complex with RuvA. In the full resolvosome a probable DNA-RuvA(4)-RuvB(12)-RuvC(2) complex forms which resolves the HJ. Requires Mg(2+) as cofactor.

The protein localises to the cytoplasm. The enzyme catalyses Endonucleolytic cleavage at a junction such as a reciprocal single-stranded crossover between two homologous DNA duplexes (Holliday junction).. In terms of biological role, the RuvA-RuvB-RuvC complex processes Holliday junction (HJ) DNA during genetic recombination and DNA repair. Endonuclease that resolves HJ intermediates. Cleaves cruciform DNA by making single-stranded nicks across the HJ at symmetrical positions within the homologous arms, yielding a 5'-phosphate and a 3'-hydroxyl group; requires a central core of homology in the junction. The consensus cleavage sequence is 5'-(A/T)TT(C/G)-3'. Cleavage occurs on the 3'-side of the TT dinucleotide at the point of strand exchange. HJ branch migration catalyzed by RuvA-RuvB allows RuvC to scan DNA until it finds its consensus sequence, where it cleaves and resolves the cruciform DNA. The polypeptide is Crossover junction endodeoxyribonuclease RuvC (Orientia tsutsugamushi (strain Ikeda) (Rickettsia tsutsugamushi)).